The chain runs to 909 residues: Nitrate reductase [NADH] (909 aa).

Cys-187 contacts Mo-molybdopterin. Residues 535–610 enclose the Cytochrome b5 heme-binding domain; sequence SKMYSMSEVK…LEDFRIGELI (76 aa). Heme is bound by residues His-570 and His-593. One can recognise an FAD-binding FR-type domain in the interval 652-764; sequence REKIPCKLVD…KGPLGHIEYQ (113 aa). Residues 704-707, 721-725, Phe-726, Phe-733, 738-740, and Thr-791 each bind FAD; these read RAYT, VVKIY, and QMS.

It belongs to the nitrate reductase family. As to quaternary structure, homodimer. FAD serves as cofactor. Requires heme as cofactor. Mo-molybdopterin is required as a cofactor.

The enzyme catalyses nitrite + NAD(+) + H2O = nitrate + NADH + H(+). Its activity is regulated as follows. Regulated by the nitrogen source and controlled by the circadian rhythm. Functionally, nitrate reductase is a key enzyme involved in the first step of nitrate assimilation in plants, fungi and bacteria. In Petunia hybrida (Petunia), this protein is Nitrate reductase [NADH] (NIA).